A 617-amino-acid chain; its full sequence is E3 ubiquitin-protein ligase synoviolin (617 aa).

Residues methionine 1–threonine 4 are Cytoplasmic-facing. Positions methionine 1–alanine 84 are necessary and sufficient for SEL1L interaction. The involved in FAM8A1 interaction stretch occupies residues methionine 1–alanine 251. A helical membrane pass occupies residues alanine 5–leucine 25. Residues lysine 26–proline 41 lie on the Lumenal side of the membrane. The chain crosses the membrane as a helical span at residues serine 42–glycine 62. The Cytoplasmic segment spans residues lysine 63–aspartate 98. The helical transmembrane segment at phenylalanine 99–leucine 119 threads the bilayer. The Lumenal portion of the chain corresponds to alanine 120–arginine 140. A helical membrane pass occupies residues isoleucine 141 to histidine 161. Over serine 162–serine 169 the chain is Cytoplasmic. Residues valine 170 to isoleucine 190 form a helical membrane-spanning segment. The Lumenal portion of the chain corresponds to lysine 191–valine 224. Residues leucine 225–isoleucine 245 form a helical membrane-spanning segment. The interaction with p53/TP53 stretch occupies residues lysine 236–arginine 270. Topologically, residues arginine 246–histidine 617 are cytoplasmic. Zn(2+)-binding residues include cysteine 291, cysteine 294, cysteine 307, histidine 309, histidine 312, cysteine 315, cysteine 326, and cysteine 329. The segment at cysteine 291–arginine 330 adopts an RING-type; atypical zinc-finger fold. 3 disordered regions span residues serine 337 to proline 375, proline 393 to glycine 453, and arginine 535 to histidine 617. The segment covering glutamine 341–proline 375 has biased composition (pro residues). Residues proline 417–alanine 451 show a composition bias toward low complexity. The interval glycine 480–arginine 535 is HAF-H domain; necessary to form higher-order Hrd1 complexes. Over residues alanine 537–proline 569 the composition is skewed to low complexity. Residues glutamate 591–alanine 600 are compositionally biased toward acidic residues. The residue at position 613 (serine 613) is a Phosphoserine.

The protein belongs to the HRD1 family. As to quaternary structure, homodimer. Interacts with p53/TP53. Interacts with HTT. Component of the HRD1 complex, which comprises at least SYNV1/HRD1, DERL1/2, FAM8A1, HERPUD1/HERP, OS9, SEL1L and UBE2J1. FAM8A1 is stabilized by interaction with SYNV1, which prevents its proteasomal degradation. OS9 and UBE2J1 recruitment to the complex may be mediated by SEL1L. SYNV1 assembles with SEL1L and FAM8A1 through its transmembrane domains, but interaction with its cytoplasmic domain is required to confer stability to FAM8A1 and enhance recruitment of HERPUD1. The HRD1 complex also associates with VIMP and may transfer misfolded proteins from the endoplasmic reticulum to VCP. May form a complex with ERLEC1, HSPA5, OS9 and SEL1L. Interacts with VCP. Interacts with UBXN6. Interacts with BAG6. Interacts with NFE2L1. Interacts (via N-terminus) with components of the pre-B cell receptor, including IGLL1 and VPREB1. Interacts with CREB3L3; this interaction leads to CREB3L3 ubiquitination and proteasomal degradation. Post-translationally, not N-glycosylated. Auto-ubiquitinated. Deubiquitinated by USP19. Ubiquitously expressed, with highest levels in liver and kidney (at protein level). Up-regulated in synovial tissues from patients with rheumatoid arthritis (at protein level).

It is found in the endoplasmic reticulum membrane. It catalyses the reaction S-ubiquitinyl-[E2 ubiquitin-conjugating enzyme]-L-cysteine + [acceptor protein]-L-lysine = [E2 ubiquitin-conjugating enzyme]-L-cysteine + N(6)-ubiquitinyl-[acceptor protein]-L-lysine.. It functions in the pathway protein modification; protein ubiquitination. In terms of biological role, E3 ubiquitin-protein ligase which accepts ubiquitin specifically from endoplasmic reticulum-associated UBC7 E2 ligase and transfers it to substrates, promoting their degradation. Component of the endoplasmic reticulum quality control (ERQC) system also called ER-associated degradation (ERAD) involved in ubiquitin-dependent degradation of misfolded endoplasmic reticulum proteins. Also promotes the degradation of normal but naturally short-lived proteins such as SGK. Protects cells from ER stress-induced apoptosis. Protects neurons from apoptosis induced by polyglutamine-expanded huntingtin (HTT) or unfolded GPR37 by promoting their degradation. Sequesters p53/TP53 in the cytoplasm and promotes its degradation, thereby negatively regulating its biological function in transcription, cell cycle regulation and apoptosis. Mediates the ubiquitination and subsequent degradation of cytoplasmic NFE2L1. During the early stage of B cell development, required for degradation of the pre-B cell receptor (pre-BCR) complex, hence supporting further differentiation into mature B cells. In Homo sapiens (Human), this protein is E3 ubiquitin-protein ligase synoviolin.